Consider the following 188-residue polypeptide: Elongation factor P-like protein (188 aa).

The protein belongs to the elongation factor P family.

The polypeptide is Elongation factor P-like protein (Stenotrophomonas maltophilia (strain R551-3)).